The sequence spans 183 residues: Apo-citrate lyase phosphoribosyl-dephospho-CoA transferase (183 aa).

It belongs to the CitX family.

The enzyme catalyses apo-[citrate lyase ACP] + 2'-(5''-triphospho-alpha-D-ribosyl)-3'-dephospho-CoA = holo-[citrate lyase ACP] + diphosphate. Its function is as follows. Transfers 2-(5''-triphosphoribosyl)-3'-dephosphocoenzyme-A on a serine residue to the apo-acyl carrier protein (gamma chain) of the citrate lyase to yield holo-acyl carrier protein. In Escherichia coli O6:K15:H31 (strain 536 / UPEC), this protein is Apo-citrate lyase phosphoribosyl-dephospho-CoA transferase.